The following is an 823-amino-acid chain: MALFLEGTAASSAMETSNFAHVIFQNVGKSYLPHGALECHYTLTQFIKPHPKDWVGIFKVGWSTARDYYTFLWSPLPDNYTEGTAINRSVVFQGYYVPNDDGEFYQFCYVTHKGEIRGASTPFQFRANSPTEEELLTMEDEGGSDILVVTTKASYLEQKMEQIQQEKKELLENLDLLQKERDELIDEKNRLEKEYEQERESSAQLRKDVQELQLSAQSLQEEREEVKRRMEESTARLLQLEEDLIGVTQKGLQKETELDCLKDRVKKLNLEKEALEGQLKNEKDEKELYKIHLKNRELENTKLSAELQMLKSVDVNKENTIAQLKDELARVKSCLAEKEKQHRQLLANSSPSGESKALREQLRQKEEQLQATQQQANMLKAELRDSSNARDRSMAELYRIRVEAETLKKGQADARAECSRLEQQLEEMKSSTQQEAQCKESDVLAVAELQREVEDLRLRLQMAAEHYKDKYKECQKLQKQVVKFNEQQGVKRSPGSDAAAGPLSASPEASAPGSPSTSDAVLDAIIHGRLKSSSKELDKNDKYRKCKQMLNEERERCSMITDELTKMEVKLREQMKTNESLRMQLAAEEDRYKSQVAEKGRELKELKDSLFVLTKEKEKLEGQLQKSVNREEEQKDSNLDVQSVFLQYPMPYAQDDPSPLLVPQRPTDLLFGNPYSSTDSRDGADGEFSDDQMPRLPPVGPPSWDSNVVCIQPARNLSRPDGLEEPEEPQSTQNDDEPAAPEPAEFLNDGQMPFCFEPTGEQKRCPLCEVIFPPHYDQSKFEEHVESHWKICPMCSEQFPLDCDQQLFEKHVLTHFDSNVLNF.

Positions V149–Q487 form a coiled coil. Disordered regions lie at residues H342–N377 and E486–D519. Residues K356–Q368 are compositionally biased toward basic and acidic residues. A compositionally biased stretch (low complexity) spans A498 to S518. A coiled-coil region spans residues Q548–N638. Residues M650 to F746 form a disordered region. A compositionally biased stretch (acidic residues) spans L723–A739. UBZ1-type zinc fingers lie at residues Q762–H788 and W789–H815. Zn(2+) contacts are provided by C765, C768, H784, H788, C792, C795, H811, and H815.

In terms of tissue distribution, expressed at relatively high levels in both proximal and distal regions of the fin bud during pectoral fin development.

May have anti-apoptotic activity. This is Tax1-binding protein 1 homolog B (tax1bp1b) from Danio rerio (Zebrafish).